The primary structure comprises 208 residues: Large ribosomal subunit protein uL3 (208 aa).

Glutamine 149 carries the N5-methylglutamine modification.

The protein belongs to the universal ribosomal protein uL3 family. Part of the 50S ribosomal subunit. Forms a cluster with proteins L14 and L19. In terms of processing, methylated by PrmB.

Functionally, one of the primary rRNA binding proteins, it binds directly near the 3'-end of the 23S rRNA, where it nucleates assembly of the 50S subunit. This chain is Large ribosomal subunit protein uL3, found in Actinobacillus succinogenes (strain ATCC 55618 / DSM 22257 / CCUG 43843 / 130Z).